The following is a 542-amino-acid chain: Chaperonin GroEL (542 aa).

ATP-binding positions include 29-32 (TLGP), 86-90 (DGTTT), Gly413, 477-479 (NAA), and Asp493.

The protein belongs to the chaperonin (HSP60) family. Forms a cylinder of 14 subunits composed of two heptameric rings stacked back-to-back. Interacts with the co-chaperonin GroES.

The protein resides in the cytoplasm. The catalysed reaction is ATP + H2O + a folded polypeptide = ADP + phosphate + an unfolded polypeptide.. Functionally, together with its co-chaperonin GroES, plays an essential role in assisting protein folding. The GroEL-GroES system forms a nano-cage that allows encapsulation of the non-native substrate proteins and provides a physical environment optimized to promote and accelerate protein folding. The protein is Chaperonin GroEL of Beutenbergia cavernae (strain ATCC BAA-8 / DSM 12333 / CCUG 43141 / JCM 11478 / NBRC 16432 / NCIMB 13614 / HKI 0122).